The following is a 272-amino-acid chain: Phosphoglycolate phosphatase (272 aa).

Asp-19 functions as the Nucleophile in the catalytic mechanism. 3 residues coordinate Mg(2+): Asp-19, Asp-21, and Asp-182.

It belongs to the HAD-like hydrolase superfamily. CbbY/CbbZ/Gph/YieH family. Requires Mg(2+) as cofactor.

The catalysed reaction is 2-phosphoglycolate + H2O = glycolate + phosphate. It functions in the pathway organic acid metabolism; glycolate biosynthesis; glycolate from 2-phosphoglycolate: step 1/1. In terms of biological role, specifically catalyzes the dephosphorylation of 2-phosphoglycolate. Is involved in the dissimilation of the intracellular 2-phosphoglycolate formed during the DNA repair of 3'-phosphoglycolate ends, a major class of DNA lesions induced by oxidative stress. This chain is Phosphoglycolate phosphatase, found in Pseudomonas fluorescens (strain Pf0-1).